The sequence spans 162 residues: Urease accessory protein UreE 1 (162 aa).

The segment at 143–162 (SGGHQHHHGHDHDHHHPDHE) is disordered. The segment covering 152-162 (HDHDHHHPDHE) has biased composition (basic and acidic residues).

Belongs to the UreE family.

The protein localises to the cytoplasm. Involved in urease metallocenter assembly. Binds nickel. Probably functions as a nickel donor during metallocenter assembly. The protein is Urease accessory protein UreE 1 of Brucella suis biovar 1 (strain 1330).